The following is a 163-amino-acid chain: Photosystem II extrinsic protein V (163 aa).

An N-terminal signal peptide occupies residues M1–A26. Residues C63, C66, H67, and H118 each coordinate heme c.

It belongs to the cytochrome c family. PsbV subfamily. PSII is composed of 1 copy each of membrane proteins PsbA, PsbB, PsbC, PsbD, PsbE, PsbF, PsbH, PsbI, PsbJ, PsbK, PsbL, PsbM, PsbT, PsbX, PsbY, PsbZ, Psb30/Ycf12, peripheral proteins PsbO, CyanoQ (PsbQ), PsbU, PsbV and a large number of cofactors. It forms dimeric complexes. It depends on heme c as a cofactor.

It localises to the cellular thylakoid membrane. Functionally, one of the extrinsic, lumenal subunits of photosystem II (PSII). PSII is a light-driven water plastoquinone oxidoreductase, using light energy to abstract electrons from H(2)O, generating a proton gradient subsequently used for ATP formation. The extrinsic proteins stabilize the structure of photosystem II oxygen-evolving complex (OEC), the ion environment of oxygen evolution and protect the OEC against heat-induced inactivation. Low-potential cytochrome c that plays a role in the OEC of PSII. The sequence is that of Photosystem II extrinsic protein V from Nostoc sp. (strain PCC 7120 / SAG 25.82 / UTEX 2576).